The chain runs to 847 residues: UPF0182 protein CYB_0372 (847 aa).

7 helical membrane passes run 7–27 (GLFL…LAAF), 51–71 (WGLG…NICS), 76–96 (ATLA…AGSL), 141–161 (FNLV…ELGL), 168–188 (LALS…LFLI), 220–240 (LPAT…FWAL), and 259–279 (WASS…FGLL).

This sequence belongs to the UPF0182 family.

Its subcellular location is the cell membrane. In Synechococcus sp. (strain JA-2-3B'a(2-13)) (Cyanobacteria bacterium Yellowstone B-Prime), this protein is UPF0182 protein CYB_0372.